The chain runs to 396 residues: Ribosomal RNA large subunit methyltransferase I (396 aa).

The region spanning 2-79 (AIRIKLKPGR…REEEIDRAFF (78 aa)) is the PUA domain.

It belongs to the methyltransferase superfamily. RlmI family.

The protein resides in the cytoplasm. It catalyses the reaction cytidine(1962) in 23S rRNA + S-adenosyl-L-methionine = 5-methylcytidine(1962) in 23S rRNA + S-adenosyl-L-homocysteine + H(+). Functionally, specifically methylates the cytosine at position 1962 (m5C1962) of 23S rRNA. This is Ribosomal RNA large subunit methyltransferase I from Shewanella putrefaciens (strain CN-32 / ATCC BAA-453).